We begin with the raw amino-acid sequence, 270 residues long: MLQACKMEGFPLVPPPSEDLVPYDTDLYQRQTHEYYPYLSSDGESHSDHYWDFHPHHVHSEFESFAENHFTELQSVQPPQLQQLYRHMELEQMHVLDTPMAPTHASLGHQVSYLPRMCLLYPSLSPAQPSSDEEEGERQSPPLEVSDGEADGLEPGPGLLHGETGSKKKIRLYQFLLDLLRSGDMKDSIWWVDKDKGTFQFSSKHKEALAHRWGIQKGNRKKMTYQKMARALRNYGKTGEVKKVKKKLTYQFSGEVLGRGALVVRRHPPH.

The segment at 124-162 (LSPAQPSSDEEEGERQSPPLEVSDGEADGLEPGPGLLHG) is disordered. A phosphoserine mark is found at serine 140 and serine 146. A compositionally biased stretch (low complexity) spans 153 to 162 (LEPGPGLLHG). Positions 170–253 (IRLYQFLLDL…VKKKLTYQFS (84 aa)) form a DNA-binding region, ETS. Residues lysine 217, arginine 230, arginine 233, and lysine 243 each coordinate DNA.

The protein belongs to the ETS family. As to quaternary structure, binds DNA as a monomer. Can form homomers. Directly interacts with CEBPD/NF-IL6-beta; this interaction does not affect DNA-binding properties of each partner. Interacts with NONO/p54(nrb). Interacts with RUNX1/AML1. Interacts with GFI1; the interaction represses SPI1 transcriptional activity, hence blocks SPI1-induced macrophage differentiation of myeloid progenitor cells. Interacts with CEBPE. Interacts with IRF4/Pip and IRF8. Interacts with JUN. Interacts with RB1. Interacts with TBP.

It localises to the nucleus. Transcriptional activity at macrophage-specific genes is inhibited by interaction with GFI1, which results in the inhibition of SPI1-induced macrophage differentiation of myeloid progenitor cells, but not that of the granulocyte lineage. Pioneer transcription factor, which controls hematopoietic cell fate by decompacting stem cell heterochromatin and allowing other transcription factors to enter otherwise inaccessible genomic sites. Once in open chromatin, can directly control gene expression by binding genetic regulatory elements and can also more broadly influence transcription by recruiting transcription factors, such as interferon regulatory factors (IRFs), to otherwise inaccessible genomic regions. Transcriptionally activates genes important for myeloid and lymphoid lineages, such as CSF1R. Transcriptional activation from certain promoters, possibly containing low affinity binding sites, is achieved cooperatively with other transcription factors. FCER1A transactivation is achieved in cooperation with GATA1. May be particularly important for the pro- to pre-B cell transition. Binds (via the ETS domain) onto the purine-rich DNA core sequence 5'-GAGGAA-3', also known as the PU-box. In vitro can bind RNA and interfere with pre-mRNA splicing. The chain is Transcription factor PU.1 (SPI1) from Sus scrofa (Pig).